The following is a 523-amino-acid chain: Butyrophilin subfamily 2 member A2 (523 aa).

Positions 1 to 32 (MEPAAALHFSLPASLLLLLLLLLLSLCALVSA) are cleaved as a signal peptide. At 33 to 265 (QFTVVGPANP…AVILTASPWM (233 aa)) the chain is on the extracellular side. Positions 34–145 (FTVVGPANPI…SYDEAILRLV (112 aa)) constitute an Ig-like V-type domain. 4 N-linked (GlcNAc...) asparagine glycosylation sites follow: Asn-50, Asn-118, Asn-220, and Asn-226. A disulfide bridge connects residues Cys-55 and Cys-129. An Ig-like C2-type domain is found at 153 to 234 (PLIEIKAQED…VNNTLLGQEK (82 aa)). Residues 266-286 (VSMTVILAVFIIFMAVSICCI) traverse the membrane as a helical segment. A coiled-coil region spans residues 286 to 321 (IKKLQREKKILSGEKKVEQEEKEIAQQLQEELRWRR). Over 287–523 (KKLQREKKIL…LHRVGTHQSL (237 aa)) the chain is Cytoplasmic. Residues 309–502 (IAQQLQEELR…IFICPALTGA (194 aa)) enclose the B30.2/SPRY domain.

Belongs to the immunoglobulin superfamily. BTN/MOG family. Post-translationally, N-glycosylated. As to expression, highly expressed in brain, bone marrow, small intestine, muscle, spleen and pancreas. Moderate expression was seen in lung, liver and kidney.

It is found in the membrane. Its function is as follows. Inhibits the proliferation of CD4 and CD8 T-cells activated by anti-CD3 antibodies, T-cell metabolism and IL2 and IFNG secretion. This Homo sapiens (Human) protein is Butyrophilin subfamily 2 member A2 (BTN2A2).